Here is a 102-residue protein sequence, read N- to C-terminus: Integration host factor subunit beta (102 aa).

The protein belongs to the bacterial histone-like protein family. Heterodimer of an alpha and a beta chain.

In terms of biological role, this protein is one of the two subunits of integration host factor, a specific DNA-binding protein that functions in genetic recombination as well as in transcriptional and translational control. This chain is Integration host factor subunit beta, found in Rhodopseudomonas palustris (strain BisA53).